The chain runs to 177 residues: Matrix protein (177 aa).

Homomultimer. Interacts with nucleoprotein and with the cytoplasmic domain of glycoprotein.

It localises to the virion membrane. It is found in the host endomembrane system. In terms of biological role, plays a major role in assembly and budding of virion. Completely covers the ribonucleoprotein coil and keep it in condensed bullet-shaped form. Inhibits viral transcription and stimulates replication. The chain is Matrix protein (M) from Lettuce necrotic yellows virus (isolate 318) (LNYV).